Consider the following 57-residue polypeptide: COP9 signalosome complex subunit 9 (57 aa).

Thr-26 carries the post-translational modification Phosphothreonine.

Belongs to the CSN9 family. In terms of assembly, component of the CSN complex, composed of COPS1/GPS1, COPS2, COPS3, COPS4, COPS5, COPS6, COPS7 (COPS7A or COPS7B), COPS8 and COPS9. In the complex, it interacts directly with COPS3, COPS5 and COPS6.

Its subcellular location is the nucleus. The protein localises to the cytoplasm. It localises to the nucleoplasm. Component of the COP9 signalosome complex (CSN), a complex involved in various cellular and developmental processes. The CSN complex is an essential regulator of the ubiquitin (Ubl) conjugation pathway by mediating the deneddylation of the cullin subunits of SCF-type E3 ligase complexes, leading to decrease the Ubl ligase activity of SCF-type complexes such as SCF, CSA or DDB2. The complex is also involved in phosphorylation of p53/TP53, c-jun/JUN, IkappaBalpha/NFKBIA, ITPK1 and IRF8/ICSBP, possibly via its association with CK2 and PKD kinases. CSN-dependent phosphorylation of TP53 and JUN promotes and protects degradation by the Ubl system, respectively. Plays a role in cell proliferation. The protein is COP9 signalosome complex subunit 9 of Bos taurus (Bovine).